The sequence spans 343 residues: Heat-inducible transcription repressor HrcA (343 aa).

It belongs to the HrcA family.

Its function is as follows. Negative regulator of class I heat shock genes (grpE-dnaK-dnaJ and groELS operons). Prevents heat-shock induction of these operons. This chain is Heat-inducible transcription repressor HrcA, found in Mycolicibacterium smegmatis (strain ATCC 700084 / mc(2)155) (Mycobacterium smegmatis).